Reading from the N-terminus, the 110-residue chain is Large ribosomal subunit protein uL22 (110 aa).

It belongs to the universal ribosomal protein uL22 family. As to quaternary structure, part of the 50S ribosomal subunit.

Its function is as follows. This protein binds specifically to 23S rRNA; its binding is stimulated by other ribosomal proteins, e.g. L4, L17, and L20. It is important during the early stages of 50S assembly. It makes multiple contacts with different domains of the 23S rRNA in the assembled 50S subunit and ribosome. Functionally, the globular domain of the protein is located near the polypeptide exit tunnel on the outside of the subunit, while an extended beta-hairpin is found that lines the wall of the exit tunnel in the center of the 70S ribosome. The protein is Large ribosomal subunit protein uL22 of Histophilus somni (strain 2336) (Haemophilus somnus).